A 232-amino-acid chain; its full sequence is tRNA1(Val) (adenine(37)-N6)-methyltransferase (232 aa).

This sequence belongs to the methyltransferase superfamily. tRNA (adenine-N(6)-)-methyltransferase family.

Its subcellular location is the cytoplasm. The enzyme catalyses adenosine(37) in tRNA1(Val) + S-adenosyl-L-methionine = N(6)-methyladenosine(37) in tRNA1(Val) + S-adenosyl-L-homocysteine + H(+). Specifically methylates the adenine in position 37 of tRNA(1)(Val) (anticodon cmo5UAC). In Haemophilus influenzae (strain ATCC 51907 / DSM 11121 / KW20 / Rd), this protein is tRNA1(Val) (adenine(37)-N6)-methyltransferase.